A 156-amino-acid polypeptide reads, in one-letter code: Small ribosomal subunit protein uS7 (156 aa).

This sequence belongs to the universal ribosomal protein uS7 family. As to quaternary structure, part of the 30S ribosomal subunit. Contacts proteins S9 and S11.

In terms of biological role, one of the primary rRNA binding proteins, it binds directly to 16S rRNA where it nucleates assembly of the head domain of the 30S subunit. Is located at the subunit interface close to the decoding center, probably blocks exit of the E-site tRNA. This chain is Small ribosomal subunit protein uS7, found in Buchnera aphidicola subsp. Acyrthosiphon pisum (strain Tuc7).